Reading from the N-terminus, the 491-residue chain is UDP-N-acetylmuramate--L-alanine ligase (491 aa).

126-132 (GTHGKTT) is a binding site for ATP.

The protein belongs to the MurCDEF family.

It localises to the cytoplasm. The catalysed reaction is UDP-N-acetyl-alpha-D-muramate + L-alanine + ATP = UDP-N-acetyl-alpha-D-muramoyl-L-alanine + ADP + phosphate + H(+). It functions in the pathway cell wall biogenesis; peptidoglycan biosynthesis. Functionally, cell wall formation. The protein is UDP-N-acetylmuramate--L-alanine ligase of Shigella dysenteriae serotype 1 (strain Sd197).